The primary structure comprises 292 residues: Phosphoribulokinase 2 (292 aa).

An ATP-binding site is contributed by 12–20 (GSSGAGTST).

The protein belongs to the phosphoribulokinase family.

The catalysed reaction is D-ribulose 5-phosphate + ATP = D-ribulose 1,5-bisphosphate + ADP + H(+). The protein operates within carbohydrate biosynthesis; Calvin cycle. This chain is Phosphoribulokinase 2 (prkB), found in Cereibacter sphaeroides (Rhodobacter sphaeroides).